The following is a 263-amino-acid chain: uncharacterized protein (263 aa).

The GST N-terminal domain maps to 44-131 (QVYSLGTPNG…YLADKFNHLI (88 aa)). One can recognise a GST C-terminal domain in the interval 134–263 (DWAQRTEVLN…ALEVDYKAIK (130 aa)).

It belongs to the GST superfamily. In terms of assembly, homodimer.

This is an uncharacterized protein from Streptococcus mutans serotype c (strain ATCC 700610 / UA159).